A 496-amino-acid polypeptide reads, in one-letter code: L-arabinose isomerase (496 aa).

Residues Glu306, Glu331, His348, and His447 each coordinate Mn(2+).

It belongs to the arabinose isomerase family. Homotetramer. Mn(2+) is required as a cofactor.

It carries out the reaction beta-L-arabinopyranose = L-ribulose. It functions in the pathway carbohydrate degradation; L-arabinose degradation via L-ribulose; D-xylulose 5-phosphate from L-arabinose (bacterial route): step 1/3. With respect to regulation, inhibited by copper. In terms of biological role, catalyzes the conversion of L-arabinose to L-ribulose. In vitro, converts D-galactose into D-tagatose. The sequence is that of L-arabinose isomerase (araA) from Geobacillus stearothermophilus (Bacillus stearothermophilus).